Reading from the N-terminus, the 274-residue chain is 2-dehydro-3-deoxyphosphooctonate aldolase (274 aa).

It belongs to the KdsA family.

It localises to the cytoplasm. The catalysed reaction is D-arabinose 5-phosphate + phosphoenolpyruvate + H2O = 3-deoxy-alpha-D-manno-2-octulosonate-8-phosphate + phosphate. It participates in carbohydrate biosynthesis; 3-deoxy-D-manno-octulosonate biosynthesis; 3-deoxy-D-manno-octulosonate from D-ribulose 5-phosphate: step 2/3. Its pathway is bacterial outer membrane biogenesis; lipopolysaccharide biosynthesis. In Rickettsia rickettsii (strain Iowa), this protein is 2-dehydro-3-deoxyphosphooctonate aldolase.